The chain runs to 337 residues: Inositol 2-dehydrogenase (337 aa).

Belongs to the Gfo/Idh/MocA family. As to quaternary structure, homotetramer.

It carries out the reaction myo-inositol + NAD(+) = scyllo-inosose + NADH + H(+). Functionally, involved in the oxidation of myo-inositol (MI) to 2-keto-myo-inositol (2KMI or 2-inosose). This chain is Inositol 2-dehydrogenase, found in Burkholderia cenocepacia (strain HI2424).